The primary structure comprises 398 residues: Histidinol-phosphate aminotransferase (398 aa).

The segment covering 1–10 (MTGQRATPQP) has biased composition (polar residues). The tract at residues 1-30 (MTGQRATPQPTLDDLPLRDDLRGKSPYGAP) is disordered. The residue at position 234 (lysine 234) is an N6-(pyridoxal phosphate)lysine.

Belongs to the class-II pyridoxal-phosphate-dependent aminotransferase family. Histidinol-phosphate aminotransferase subfamily. In terms of assembly, homodimer. Pyridoxal 5'-phosphate is required as a cofactor.

The enzyme catalyses L-histidinol phosphate + 2-oxoglutarate = 3-(imidazol-4-yl)-2-oxopropyl phosphate + L-glutamate. It functions in the pathway amino-acid biosynthesis; L-histidine biosynthesis; L-histidine from 5-phospho-alpha-D-ribose 1-diphosphate: step 7/9. This is Histidinol-phosphate aminotransferase from Mycobacterium avium (strain 104).